A 284-amino-acid polypeptide reads, in one-letter code: L-ribulose-5-phosphate 3-epimerase UlaE (284 aa).

Belongs to the L-ribulose-5-phosphate 3-epimerase family.

It catalyses the reaction L-ribulose 5-phosphate = L-xylulose 5-phosphate. It functions in the pathway cofactor degradation; L-ascorbate degradation; D-xylulose 5-phosphate from L-ascorbate: step 3/4. In terms of biological role, catalyzes the isomerization of L-xylulose-5-phosphate to L-ribulose-5-phosphate. Is involved in the anaerobic L-ascorbate utilization. In Shigella flexneri serotype 5b (strain 8401), this protein is L-ribulose-5-phosphate 3-epimerase UlaE.